Here is a 289-residue protein sequence, read N- to C-terminus: MALNISVKVHPVVLFQIVDAYERRNADSHRVIGTLWGTSDKGVVEVTNCFCVPHKEHADQVEAELNYAMDVYELNRRVNSSESIVGWWATGNEVTNHSSVIHEYYSRECREPVHVTLDTSLAGGRMGLRAYVCVPLGVPNGKQGCMFTPVDVTLTCYEPEIVGLQVCQKTVSGGGRGSSGVAAGSDLAQVMSAASSLESLLEQALQYADGAAAGAPADAEAGRALLQLAHSAPDLAKDTFSDAFASSVKDLLMVVTLAQLIKTQLQLNEKLTLLTSPVNTTIYKGRPNV.

The 131-residue stretch at 7 to 137 folds into the MPN domain; the sequence is VKVHPVVLFQ…LRAYVCVPLG (131 aa).

It belongs to the eIF-3 subunit F family. In terms of assembly, component of the eukaryotic translation initiation factor 3 (eIF-3) complex.

It localises to the cytoplasm. Component of the eukaryotic translation initiation factor 3 (eIF-3) complex, which is involved in protein synthesis of a specialized repertoire of mRNAs and, together with other initiation factors, stimulates binding of mRNA and methionyl-tRNAi to the 40S ribosome. The eIF-3 complex specifically targets and initiates translation of a subset of mRNAs involved in cell proliferation. The sequence is that of Eukaryotic translation initiation factor 3 subunit F from Bombyx mori (Silk moth).